A 201-amino-acid polypeptide reads, in one-letter code: Small ribosomal subunit protein uS4c (201 aa).

Residues 23 to 42 (SKKPRAGSNLRNQLRPGKKS) are disordered. Residues 89-151 (MRLDNILFRL…QKSKSLVQNY (63 aa)) form the S4 RNA-binding domain.

Belongs to the universal ribosomal protein uS4 family. In terms of assembly, part of the 30S ribosomal subunit. Contacts protein S5. The interaction surface between S4 and S5 is involved in control of translational fidelity.

Its subcellular location is the plastid. It is found in the chloroplast. One of the primary rRNA binding proteins, it binds directly to 16S rRNA where it nucleates assembly of the body of the 30S subunit. Its function is as follows. With S5 and S12 plays an important role in translational accuracy. This is Small ribosomal subunit protein uS4c (rps4) from Morus indica (Mulberry).